The primary structure comprises 426 residues: D-tagatose-1,6-bisphosphate aldolase subunit KbaZ (426 aa).

It belongs to the GatZ/KbaZ family. KbaZ subfamily. Forms a complex with KbaY.

Its pathway is carbohydrate metabolism; D-tagatose 6-phosphate degradation; D-glyceraldehyde 3-phosphate and glycerone phosphate from D-tagatose 6-phosphate: step 2/2. Functionally, component of the tagatose-1,6-bisphosphate aldolase KbaYZ that is required for full activity and stability of the Y subunit. Could have a chaperone-like function for the proper and stable folding of KbaY. When expressed alone, KbaZ does not show any aldolase activity. This is D-tagatose-1,6-bisphosphate aldolase subunit KbaZ from Escherichia coli (strain K12 / MC4100 / BW2952).